The primary structure comprises 515 residues: Chromosomal replication initiator protein DnaA (515 aa).

Residues 1–89 are domain I, interacts with DnaA modulators; it reads MVADQAVLSS…LLAISIDANL (89 aa). Residues 89-172 are domain II; it reads LQPPRTPSSE…APPSTSAETS (84 aa). 2 disordered regions span residues 90 to 130 and 142 to 171; these read QPPR…SRRA and PPAD…SAET. Low complexity-rich tracts occupy residues 102 to 114 and 143 to 160; these read SSLA…AAAP and PADV…NGKP. Residues 173–389 are domain III, AAA+ region; it reads RLNDRYHFET…GALIRVTAFA (217 aa). Residues Gly217, Gly219, Lys220, and Thr221 each contribute to the ATP site. A domain IV, binds dsDNA region spans residues 390-515; the sequence is SLNRQTVDIE…NEIKRKQRGA (126 aa).

The protein belongs to the DnaA family. In terms of assembly, oligomerizes as a right-handed, spiral filament on DNA at oriC.

The protein localises to the cytoplasm. Functionally, plays an essential role in the initiation and regulation of chromosomal replication. ATP-DnaA binds to the origin of replication (oriC) to initiate formation of the DNA replication initiation complex once per cell cycle. Binds the DnaA box (a 9 base pair repeat at the origin) and separates the double-stranded (ds)DNA. Forms a right-handed helical filament on oriC DNA; dsDNA binds to the exterior of the filament while single-stranded (ss)DNA is stabiized in the filament's interior. The ATP-DnaA-oriC complex binds and stabilizes one strand of the AT-rich DNA unwinding element (DUE), permitting loading of DNA polymerase. After initiation quickly degrades to an ADP-DnaA complex that is not apt for DNA replication. Binds acidic phospholipids. This is Chromosomal replication initiator protein DnaA from Micrococcus luteus (strain ATCC 4698 / DSM 20030 / JCM 1464 / CCM 169 / CCUG 5858 / IAM 1056 / NBRC 3333 / NCIMB 9278 / NCTC 2665 / VKM Ac-2230) (Micrococcus lysodeikticus).